The following is a 267-amino-acid chain: uncharacterized protein (267 aa).

Belongs to the lin-8 family.

This is an uncharacterized protein from Caenorhabditis elegans.